The sequence spans 430 residues: Paraneoplastic antigen-like protein 8A (430 aa).

A compositionally biased stretch (basic and acidic residues) spans 219 to 228 (WKNTEDHGDP). Disordered regions lie at residues 219-270 (WKNT…NSNY), 313-364 (DPSD…RKKK), and 392-430 (GLGA…SRKL). A compositionally biased stretch (basic residues) spans 232-250 (LVRRPGGKIRSRRRKQKKN). Residues 261–270 (SQGSNYNSNY) show a composition bias toward polar residues.

It belongs to the PNMA family.

This Mus musculus (Mouse) protein is Paraneoplastic antigen-like protein 8A.